The primary structure comprises 496 residues: Iroquois-class homeodomain protein irx-4 (496 aa).

Positions Gly141–Asn203 form a DNA-binding region, homeobox; TALE-type. Residues Asn203–Thr236 form a disordered region. Residues Asp221–Asp231 show a composition bias toward acidic residues.

This sequence belongs to the TALE/IRO homeobox family. Expressed in the neural plate in overlapping patterns with other irx members, which all share an anterior border of expression. Broadly expressed in the tailbud rhombencephalon (hindbrain). Outside the nervous system and at tailbud stages, expressed in the developing otic vesicle, branchial arches and prospective heart region.

The protein resides in the nucleus. Acts partially redundantly with other irx members in neural patterning. Required for formation of the posterior forebrain, midbrain, hindbrain, and to a lesser extent, spinal cord. Patterns the neuroectoderm in both the anterior/posterior and dorsal/ventral axes. Does not appear to play a role in pronephros kidney development. This chain is Iroquois-class homeodomain protein irx-4, found in Xenopus tropicalis (Western clawed frog).